The sequence spans 429 residues: 3-phosphoshikimate 1-carboxyvinyltransferase (429 aa).

Lys-22, Ser-23, and Arg-27 together coordinate 3-phosphoshikimate. Lys-22 is a phosphoenolpyruvate binding site. The phosphoenolpyruvate site is built by Gly-93 and Arg-122. The 3-phosphoshikimate site is built by Ser-168, Ser-169, Gln-170, Ser-196, Asp-311, and Lys-338. Gln-170 provides a ligand contact to phosphoenolpyruvate. The active-site Proton acceptor is Asp-311. Arg-342 and Arg-384 together coordinate phosphoenolpyruvate.

The protein belongs to the EPSP synthase family. In terms of assembly, monomer.

Its subcellular location is the cytoplasm. The catalysed reaction is 3-phosphoshikimate + phosphoenolpyruvate = 5-O-(1-carboxyvinyl)-3-phosphoshikimate + phosphate. It participates in metabolic intermediate biosynthesis; chorismate biosynthesis. Functionally, catalyzes the transfer of the enolpyruvyl moiety of phosphoenolpyruvate (PEP) to the 5-hydroxyl of shikimate-3-phosphate (S3P) to produce enolpyruvyl shikimate-3-phosphate and inorganic phosphate. The protein is 3-phosphoshikimate 1-carboxyvinyltransferase of Methanocaldococcus jannaschii (strain ATCC 43067 / DSM 2661 / JAL-1 / JCM 10045 / NBRC 100440) (Methanococcus jannaschii).